The following is a 525-amino-acid chain: GMP synthase [glutamine-hydrolyzing] (525 aa).

The Glutamine amidotransferase type-1 domain maps to 8-207 (KILILDFGSQ…AVAICGCGTN (200 aa)). Cysteine 85 acts as the Nucleophile in catalysis. Catalysis depends on residues histidine 181 and glutamate 183. The region spanning 208–400 (WKPSSIIEDA…LGLPYNMLYR (193 aa)) is the GMPS ATP-PPase domain. 235 to 241 (SGGVDSS) serves as a coordination point for ATP.

As to quaternary structure, homodimer.

The enzyme catalyses XMP + L-glutamine + ATP + H2O = GMP + L-glutamate + AMP + diphosphate + 2 H(+). The protein operates within purine metabolism; GMP biosynthesis; GMP from XMP (L-Gln route): step 1/1. Its function is as follows. Catalyzes the synthesis of GMP from XMP. The sequence is that of GMP synthase [glutamine-hydrolyzing] from Shewanella denitrificans (strain OS217 / ATCC BAA-1090 / DSM 15013).